A 107-amino-acid chain; its full sequence is Nucleoid-associated protein PHZ_c0369 (107 aa).

The protein belongs to the YbaB/EbfC family. Homodimer.

Its subcellular location is the cytoplasm. The protein localises to the nucleoid. Functionally, binds to DNA and alters its conformation. May be involved in regulation of gene expression, nucleoid organization and DNA protection. This Phenylobacterium zucineum (strain HLK1) protein is Nucleoid-associated protein PHZ_c0369.